The following is a 271-amino-acid chain: Thiazole synthase (271 aa).

Lys-95 (schiff-base intermediate with DXP) is an active-site residue. Residues Gly-156, 182 to 183 (AG), and 204 to 205 (NT) contribute to the 1-deoxy-D-xylulose 5-phosphate site.

This sequence belongs to the ThiG family. Homotetramer. Forms heterodimers with either ThiH or ThiS.

The protein resides in the cytoplasm. The catalysed reaction is [ThiS sulfur-carrier protein]-C-terminal-Gly-aminoethanethioate + 2-iminoacetate + 1-deoxy-D-xylulose 5-phosphate = [ThiS sulfur-carrier protein]-C-terminal Gly-Gly + 2-[(2R,5Z)-2-carboxy-4-methylthiazol-5(2H)-ylidene]ethyl phosphate + 2 H2O + H(+). It participates in cofactor biosynthesis; thiamine diphosphate biosynthesis. In terms of biological role, catalyzes the rearrangement of 1-deoxy-D-xylulose 5-phosphate (DXP) to produce the thiazole phosphate moiety of thiamine. Sulfur is provided by the thiocarboxylate moiety of the carrier protein ThiS. In vitro, sulfur can be provided by H(2)S. The protein is Thiazole synthase of Yersinia pseudotuberculosis serotype O:1b (strain IP 31758).